The primary structure comprises 1342 residues: DNA-directed RNA polymerase subunit beta (1342 aa).

This sequence belongs to the RNA polymerase beta chain family. In terms of assembly, the RNAP catalytic core consists of 2 alpha, 1 beta, 1 beta' and 1 omega subunit. When a sigma factor is associated with the core the holoenzyme is formed, which can initiate transcription.

The enzyme catalyses RNA(n) + a ribonucleoside 5'-triphosphate = RNA(n+1) + diphosphate. Its function is as follows. DNA-dependent RNA polymerase catalyzes the transcription of DNA into RNA using the four ribonucleoside triphosphates as substrates. In Salmonella choleraesuis (strain SC-B67), this protein is DNA-directed RNA polymerase subunit beta.